A 296-amino-acid chain; its full sequence is Probable 2-(5''-triphosphoribosyl)-3'-dephosphocoenzyme-A synthase (296 aa).

This sequence belongs to the CitG/MdcB family.

It catalyses the reaction 3'-dephospho-CoA + ATP = 2'-(5''-triphospho-alpha-D-ribosyl)-3'-dephospho-CoA + adenine. This Streptococcus mutans serotype c (strain ATCC 700610 / UA159) protein is Probable 2-(5''-triphosphoribosyl)-3'-dephosphocoenzyme-A synthase.